Consider the following 843-residue polypeptide: Protein P (843 aa).

A terminal protein domain (TP) region spans residues 1–177 (MPLSYPHFRK…FCGSQYSWEQ (177 aa)). Residues 178–346 (ELQHGSTSLN…YCLSHIINLL (169 aa)) are spacer. Disordered stretches follow at residues 228–255 (KQGQ…RWPA) and 284–314 (EANP…SVGS). Over residues 239 to 249 (RSGRLRSRVHT) the composition is skewed to basic residues. A polymerase/reverse transcriptase domain (RT) region spans residues 347–690 (EDWGPCYEHG…YMNLYPVARQ (344 aa)). A Reverse transcriptase domain is found at 357-600 (EHHIRTPRTP…YNLHFMGYVI (244 aa)). The Mg(2+) site is built by Asp-429, Asp-551, and Asp-552.

This sequence belongs to the hepadnaviridae P protein family.

The enzyme catalyses DNA(n) + a 2'-deoxyribonucleoside 5'-triphosphate = DNA(n+1) + diphosphate. The catalysed reaction is Endonucleolytic cleavage to 5'-phosphomonoester.. Activated by host HSP70 and HSP40 in vitro to be able to bind the epsilon loop of the pgRNA. Because deletion of the RNase H region renders the protein partly chaperone-independent, the chaperones may be needed indirectly to relieve occlusion of the RNA-binding site by this domain. Inhibited by several reverse-transcriptase inhibitors: Lamivudine, Adefovir and Entecavir. Its function is as follows. Multifunctional enzyme that converts the viral RNA genome into dsDNA in viral cytoplasmic capsids. This enzyme displays a DNA polymerase activity that can copy either DNA or RNA templates, and a ribonuclease H (RNase H) activity that cleaves the RNA strand of RNA-DNA heteroduplexes in a partially processive 3'- to 5'-endonucleasic mode. Neo-synthesized pregenomic RNA (pgRNA) are encapsidated together with the P protein, and reverse-transcribed inside the nucleocapsid. Initiation of reverse-transcription occurs first by binding the epsilon loop on the pgRNA genome, and is initiated by protein priming, thereby the 5'-end of (-)DNA is covalently linked to P protein. Partial (+)DNA is synthesized from the (-)DNA template and generates the relaxed circular DNA (RC-DNA) genome. After budding and infection, the RC-DNA migrates in the nucleus, and is converted into a plasmid-like covalently closed circular DNA (cccDNA). The activity of P protein does not seem to be necessary for cccDNA generation, and is presumably released from (+)DNA by host nuclear DNA repair machinery. This is Protein P from Hepatitis B virus genotype F2 subtype adw4q (isolate Senegal/9203) (HBV-F).